A 175-amino-acid chain; its full sequence is Protein GrpE (175 aa).

This sequence belongs to the GrpE family. In terms of assembly, homodimer.

Its subcellular location is the cytoplasm. Participates actively in the response to hyperosmotic and heat shock by preventing the aggregation of stress-denatured proteins, in association with DnaK and GrpE. It is the nucleotide exchange factor for DnaK and may function as a thermosensor. Unfolded proteins bind initially to DnaJ; upon interaction with the DnaJ-bound protein, DnaK hydrolyzes its bound ATP, resulting in the formation of a stable complex. GrpE releases ADP from DnaK; ATP binding to DnaK triggers the release of the substrate protein, thus completing the reaction cycle. Several rounds of ATP-dependent interactions between DnaJ, DnaK and GrpE are required for fully efficient folding. The chain is Protein GrpE from Thermoplasma acidophilum (strain ATCC 25905 / DSM 1728 / JCM 9062 / NBRC 15155 / AMRC-C165).